A 338-amino-acid polypeptide reads, in one-letter code: Sesquiterpene synthase 2 (338 aa).

Mg(2+) is bound by residues Asp93, Asn228, Ser232, and Glu236. The DDXXD motif signature appears at 93–97 (DNISD). Positions 228–236 (NDIFSYNVE) match the NSE/DTE motif motif. Positions 316 and 317 each coordinate (2E,6E)-farnesyl diphosphate.

It belongs to the terpene synthase family. It depends on Mg(2+) as a cofactor.

It carries out the reaction (2E,6E)-farnesyl diphosphate = alpha-copaene + diphosphate. The catalysed reaction is (2E,6E)-farnesyl diphosphate = beta-copaene + diphosphate. It catalyses the reaction (2E,6E)-farnesyl diphosphate = alpha-muurolene + diphosphate. The enzyme catalyses (2E,6E)-farnesyl diphosphate = gamma-muurolene + diphosphate. It carries out the reaction (2E,6E)-farnesyl diphosphate = delta-cadinene + diphosphate. Functionally, terpene cyclase that catalyzes the cyclization of farnesyl diphosphate (FPP) to various sesquiterpenes, including alpha-copaene, beta-copaene, beta-elemene, alpha-muurolene, gamma-muurolene and delta-cadinene. This chain is Sesquiterpene synthase 2, found in Postia placenta (strain ATCC 44394 / Madison 698-R) (Brown rot fungus).